Reading from the N-terminus, the 383-residue chain is Glutamyl-tRNA reductase (383 aa).

Residues 38 to 41, Ser82, 87 to 89, and Gln93 each bind substrate; these read TCNR and EDQ. Cys39 (nucleophile) is an active-site residue. 161-166 contributes to the NADP(+) binding site; it reads GAGEIA.

This sequence belongs to the glutamyl-tRNA reductase family. Homodimer.

It carries out the reaction (S)-4-amino-5-oxopentanoate + tRNA(Glu) + NADP(+) = L-glutamyl-tRNA(Glu) + NADPH + H(+). It functions in the pathway porphyrin-containing compound metabolism; protoporphyrin-IX biosynthesis; 5-aminolevulinate from L-glutamyl-tRNA(Glu): step 1/2. In terms of biological role, catalyzes the NADPH-dependent reduction of glutamyl-tRNA(Glu) to glutamate 1-semialdehyde (GSA). The protein is Glutamyl-tRNA reductase of Methanococcus aeolicus (strain ATCC BAA-1280 / DSM 17508 / OCM 812 / Nankai-3).